A 475-amino-acid polypeptide reads, in one-letter code: UDP-N-acetylmuramate--L-alanine ligase (475 aa).

An ATP-binding site is contributed by 112–118; sequence GTHGKTT.

This sequence belongs to the MurCDEF family.

The protein localises to the cytoplasm. The catalysed reaction is UDP-N-acetyl-alpha-D-muramate + L-alanine + ATP = UDP-N-acetyl-alpha-D-muramoyl-L-alanine + ADP + phosphate + H(+). The protein operates within cell wall biogenesis; peptidoglycan biosynthesis. Its function is as follows. Cell wall formation. The chain is UDP-N-acetylmuramate--L-alanine ligase from Cupriavidus pinatubonensis (strain JMP 134 / LMG 1197) (Cupriavidus necator (strain JMP 134)).